A 380-amino-acid polypeptide reads, in one-letter code: Queuine tRNA-ribosyltransferase (380 aa).

Asp-89 functions as the Proton acceptor in the catalytic mechanism. Substrate-binding positions include 89-93 (DSGGF), Asp-143, Gln-187, and Gly-214. The segment at 245 to 251 (GVGKPED) is RNA binding. Asp-264 serves as the catalytic Nucleophile. Residues 269-273 (TRNAR) are RNA binding; important for wobble base 34 recognition. 4 residues coordinate Zn(2+): Cys-302, Cys-304, Cys-307, and His-333.

Belongs to the queuine tRNA-ribosyltransferase family. Homodimer. Within each dimer, one monomer is responsible for RNA recognition and catalysis, while the other monomer binds to the replacement base PreQ1. It depends on Zn(2+) as a cofactor.

The catalysed reaction is 7-aminomethyl-7-carbaguanine + guanosine(34) in tRNA = 7-aminomethyl-7-carbaguanosine(34) in tRNA + guanine. It functions in the pathway tRNA modification; tRNA-queuosine biosynthesis. In terms of biological role, catalyzes the base-exchange of a guanine (G) residue with the queuine precursor 7-aminomethyl-7-deazaguanine (PreQ1) at position 34 (anticodon wobble position) in tRNAs with GU(N) anticodons (tRNA-Asp, -Asn, -His and -Tyr). Catalysis occurs through a double-displacement mechanism. The nucleophile active site attacks the C1' of nucleotide 34 to detach the guanine base from the RNA, forming a covalent enzyme-RNA intermediate. The proton acceptor active site deprotonates the incoming PreQ1, allowing a nucleophilic attack on the C1' of the ribose to form the product. After dissociation, two additional enzymatic reactions on the tRNA convert PreQ1 to queuine (Q), resulting in the hypermodified nucleoside queuosine (7-(((4,5-cis-dihydroxy-2-cyclopenten-1-yl)amino)methyl)-7-deazaguanosine). The polypeptide is Queuine tRNA-ribosyltransferase (Proteus mirabilis (strain HI4320)).